We begin with the raw amino-acid sequence, 283 residues long: Shikimate dehydrogenase (NADP(+)) (283 aa).

Shikimate-binding positions include Ser16–Ser18 and Thr63. Lys67 serves as the catalytic Proton acceptor. Asp79 is an NADP(+) binding site. Positions 88 and 103 each coordinate shikimate. Residues Gly128–Ala132, Ala223, and Gly243 each bind NADP(+).

It belongs to the shikimate dehydrogenase family. In terms of assembly, homodimer.

The catalysed reaction is shikimate + NADP(+) = 3-dehydroshikimate + NADPH + H(+). Its pathway is metabolic intermediate biosynthesis; chorismate biosynthesis; chorismate from D-erythrose 4-phosphate and phosphoenolpyruvate: step 4/7. Functionally, involved in the biosynthesis of the chorismate, which leads to the biosynthesis of aromatic amino acids. Catalyzes the reversible NADPH linked reduction of 3-dehydroshikimate (DHSA) to yield shikimate (SA). The sequence is that of Shikimate dehydrogenase (NADP(+)) from Xanthomonas campestris pv. campestris (strain 8004).